The sequence spans 283 residues: Elongation factor Ts (283 aa).

Residues 80–83 form an involved in Mg(2+) ion dislocation from EF-Tu region; it reads TDFV.

Belongs to the EF-Ts family.

It localises to the cytoplasm. Associates with the EF-Tu.GDP complex and induces the exchange of GDP to GTP. It remains bound to the aminoacyl-tRNA.EF-Tu.GTP complex up to the GTP hydrolysis stage on the ribosome. The protein is Elongation factor Ts of Salmonella agona (strain SL483).